Consider the following 494-residue polypeptide: Glycerol kinase (494 aa).

ADP is bound at residue Thr12. ATP contacts are provided by Thr12, Thr13, and Ser14. A sn-glycerol 3-phosphate-binding site is contributed by Thr12. Position 16 (Arg16) interacts with ADP. Residues Arg82, Glu83, Tyr135, and Asp244 each contribute to the sn-glycerol 3-phosphate site. Residues Arg82, Glu83, Tyr135, Asp244, and Gln245 each contribute to the glycerol site. ADP is bound by residues Thr266 and Gly309. ATP-binding residues include Thr266, Gly309, Gln313, and Gly409. 2 residues coordinate ADP: Gly409 and Asn413.

It belongs to the FGGY kinase family.

It carries out the reaction glycerol + ATP = sn-glycerol 3-phosphate + ADP + H(+). Its pathway is polyol metabolism; glycerol degradation via glycerol kinase pathway; sn-glycerol 3-phosphate from glycerol: step 1/1. Its activity is regulated as follows. Inhibited by fructose 1,6-bisphosphate (FBP). In terms of biological role, key enzyme in the regulation of glycerol uptake and metabolism. Catalyzes the phosphorylation of glycerol to yield sn-glycerol 3-phosphate. In Alteromonas mediterranea (strain DSM 17117 / CIP 110805 / LMG 28347 / Deep ecotype), this protein is Glycerol kinase.